A 153-amino-acid chain; its full sequence is Large ribosomal subunit protein uL22 (153 aa).

The protein belongs to the universal ribosomal protein uL22 family. As to quaternary structure, part of the 50S ribosomal subunit.

This protein binds specifically to 23S rRNA. It makes multiple contacts with different domains of the 23S rRNA in the assembled 50S subunit and ribosome. Functionally, the globular domain of the protein is located near the polypeptide exit tunnel on the outside of the subunit, while an extended beta-hairpin is found that lines the wall of the exit tunnel in the center of the 70S ribosome. The chain is Large ribosomal subunit protein uL22 from Methanocella arvoryzae (strain DSM 22066 / NBRC 105507 / MRE50).